The following is a 328-amino-acid chain: Flagellar motor switch protein FliM (328 aa).

The interval 1 to 45 (MSDVLSQEEINQLIEALMKGELKEEDLLKEEEEKKVKPYDFKRPS) is interaction with unphosphorylated CheY.

It belongs to the FliM family. As to quaternary structure, interacts (via N-terminus) with unphosphorylated CheY. Interacts (via central domain) with FliG (via central domain or via central domain and C-terminus).

It localises to the cell inner membrane. It is found in the bacterial flagellum basal body. FliM is one of three proteins (FliG, FliN, FliM) that forms the rotor-mounted switch complex (C ring), located at the base of the basal body. This complex interacts with the CheY and CheX chemotaxis proteins, in addition to contacting components of the motor that determine the direction of flagellar rotation. The protein is Flagellar motor switch protein FliM of Thermotoga maritima (strain ATCC 43589 / DSM 3109 / JCM 10099 / NBRC 100826 / MSB8).